We begin with the raw amino-acid sequence, 153 residues long: Transcriptional repressor NrdR (153 aa).

A zinc finger lies at 3–34 (CPSCFHNGTRVLDSRPVDEGRSIRRRRECESC). In terms of domain architecture, ATP-cone spans 49–139 (LIVVKKEGTR…VYRQFKDLNV (91 aa)).

This sequence belongs to the NrdR family. Zn(2+) is required as a cofactor.

In terms of biological role, negatively regulates transcription of bacterial ribonucleotide reductase nrd genes and operons by binding to NrdR-boxes. The protein is Transcriptional repressor NrdR of Bacillus mycoides (strain KBAB4) (Bacillus weihenstephanensis).